The sequence spans 320 residues: RNA-binding protein Musashi homolog 1 (320 aa).

Over residues 1-14 (MTTTVSTGATAVAT) the composition is skewed to low complexity. Positions 1 to 48 (MTTTVSTGATAVATLRETSPPVDGHEEARLNADSDDGSHGSQDPGKMF) are disordered. At threonine 18 the chain carries Phosphothreonine. A phosphoserine mark is found at serine 19 and serine 34. The span at 23–38 (DGHEEARLNADSDDGS) shows a compositional bias: basic and acidic residues. RRM domains lie at 45–124 (GKMF…FPKR) and 134–211 (KKVF…KAQP). 2 required for binding to target mRNAs regions span residues 88–93 (FGFITF) and 177–182 (FGFVTF).

Belongs to the Musashi family. In terms of tissue distribution, expressed in the gut and in AVA, AFD, RMD, RMED, RMEV, RMER and RMEL neurons (at protein level). In the tail expressed in neurons and all the ray sensilla. Expressed in male specific C1-C4 neurons.

It is found in the cytoplasm. The protein localises to the perikaryon. Its function is as follows. RNA binding protein that regulates the expression of target mRNAs at the translation level. Binds RNA containing the 5'-[GA]U(1-3)AGU-3' motif located in the 3' UTR of the target mRNA. Binds to the mRNA of three Arp2/3 complex components arx-1, arx-2 and arx-3 and negatively regulates their translation during association learning. Plays a role in time-dependent memory loss and the retention of conditioned behavior over time, probably through negative regulation of the Arp2/3 actin cytoskeleton branching complex and regulation of synapse size. Required for two aspects of male mating behavior: turning around the hermaphrodite head or tail and vulva location. In Caenorhabditis elegans, this protein is RNA-binding protein Musashi homolog 1.